The sequence spans 1342 residues: Cytokinesis protein sepH (1342 aa).

Residues 1–10 (MVSRSSEGAE) are compositionally biased toward low complexity. Residues 1-47 (MVSRSSEGAEGPPPSAPKPPNTPAKSRLSRLGSSPSKREDKSRDDRM) are disordered. Pro residues predominate over residues 11–22 (GPPPSAPKPPNT). Basic and acidic residues predominate over residues 36-47 (SKREDKSRDDRM). In terms of domain architecture, Protein kinase spans 61–308 (YQLGDCLGKG…ARKLLKHPWI (248 aa)). Residues 67–75 (LGKGAFGSV) and Lys90 contribute to the ATP site. Asp180 functions as the Proton acceptor in the catalytic mechanism. Disordered stretches follow at residues 336–396 (NEAL…EEDN), 441–486 (IKSD…QLQE), and 552–591 (ADENVDPFESSPSKEAIRNRASAEDVMGQQPQLRKQISVK). Positions 369–379 (KDTLPSPVSRN) are enriched in polar residues. The stretch at 658 to 695 (FAQLEEGLDEMDLEANIARDKHARLRNQVEGLVSSLKT) forms a coiled coil. The segment at 1201 to 1342 (SEAYGMGKRK…QTQADADWTP (142 aa)) is disordered. Residues 1207–1217 (GKRKPMVRRRS) show a composition bias toward basic residues. Composition is skewed to polar residues over residues 1218-1244 (TSATPPNLLANQSAPSTPQMNRTSQSK) and 1273-1290 (DGSTPSLTAGLNGSTGAS). Residues 1315–1324 (RPSSSLSRRQ) show a composition bias toward low complexity.

Belongs to the protein kinase superfamily. Ser/Thr protein kinase family. CDC7 subfamily. It depends on Mg(2+) as a cofactor.

The catalysed reaction is L-seryl-[protein] + ATP = O-phospho-L-seryl-[protein] + ADP + H(+). It catalyses the reaction L-threonyl-[protein] + ATP = O-phospho-L-threonyl-[protein] + ADP + H(+). Required for early events during cytokinesis including localization of cytoskeletal components to the cytokinetic ring. This Aspergillus terreus (strain NIH 2624 / FGSC A1156) protein is Cytokinesis protein sepH.